Here is a 188-residue protein sequence, read N- to C-terminus: Peroxiredoxin y4vD (188 aa).

Residues 2–152 (PVKKRVPFVA…VEQWFEEEGF (151 aa)) enclose the Thioredoxin domain. Catalysis depends on C56, which acts as the Cysteine sulfenic acid (-SOH) intermediate (for peroxiredoxin activity).

This sequence belongs to the peroxiredoxin family. Prx5 subfamily. Monomer.

The enzyme catalyses a hydroperoxide + 2 glutathione = an alcohol + glutathione disulfide + H2O. Thiol-specific peroxidase that catalyzes the reduction of hydrogen peroxide and organic hydroperoxides to water and alcohols, respectively. Plays a role in cell protection against oxidative stress by detoxifying peroxides. In Sinorhizobium fredii (strain NBRC 101917 / NGR234), this protein is Peroxiredoxin y4vD.